A 301-amino-acid chain; its full sequence is Acetyl-coenzyme A carboxylase carboxyl transferase subunit beta (301 aa).

The region spanning 29-298 is the CoA carboxyltransferase N-terminal domain; it reads LWVKCPETGQ…AEPAEEEAEP (270 aa).

It belongs to the AccD/PCCB family. In terms of assembly, acetyl-CoA carboxylase is a heterohexamer composed of biotin carboxyl carrier protein (AccB), biotin carboxylase (AccC) and two subunits each of ACCase subunit alpha (AccA) and ACCase subunit beta (AccD).

It is found in the cytoplasm. It catalyses the reaction N(6)-carboxybiotinyl-L-lysyl-[protein] + acetyl-CoA = N(6)-biotinyl-L-lysyl-[protein] + malonyl-CoA. The protein operates within lipid metabolism; malonyl-CoA biosynthesis; malonyl-CoA from acetyl-CoA: step 1/1. Component of the acetyl coenzyme A carboxylase (ACC) complex. Biotin carboxylase (BC) catalyzes the carboxylation of biotin on its carrier protein (BCCP) and then the CO(2) group is transferred by the transcarboxylase to acetyl-CoA to form malonyl-CoA. The polypeptide is Acetyl-coenzyme A carboxylase carboxyl transferase subunit beta (Methylobacterium nodulans (strain LMG 21967 / CNCM I-2342 / ORS 2060)).